The sequence spans 128 residues: Photosystem II reaction center Psb28 protein (128 aa).

Residues 109–128 (SGLGYSQDSGEAPASDSSNG) form a disordered region. Residues 111 to 128 (LGYSQDSGEAPASDSSNG) are compositionally biased toward polar residues.

It belongs to the Psb28 family. Part of the photosystem II complex.

The protein localises to the cellular thylakoid membrane. The chain is Photosystem II reaction center Psb28 protein from Synechococcus sp. (strain CC9311).